Reading from the N-terminus, the 102-residue chain is UPF0473 protein SAS1551 (102 aa).

This sequence belongs to the UPF0473 family.

The sequence is that of UPF0473 protein SAS1551 from Staphylococcus aureus (strain MSSA476).